The chain runs to 359 residues: Peptide chain release factor 1 (359 aa).

At glutamine 236 the chain carries N5-methylglutamine.

Belongs to the prokaryotic/mitochondrial release factor family. In terms of processing, methylated by PrmC. Methylation increases the termination efficiency of RF1.

The protein localises to the cytoplasm. In terms of biological role, peptide chain release factor 1 directs the termination of translation in response to the peptide chain termination codons UAG and UAA. In Mycoplasma pneumoniae (strain ATCC 29342 / M129 / Subtype 1) (Mycoplasmoides pneumoniae), this protein is Peptide chain release factor 1 (prfA).